The sequence spans 213 residues: Ribonuclease HII (213 aa).

Positions 1–213 (MKIIGIDEAG…SWKTAQKFIQ (213 aa)) constitute an RNase H type-2 domain. Residues D7, E8, and D105 each coordinate a divalent metal cation.

Belongs to the RNase HII family. Requires Mn(2+) as cofactor. It depends on Mg(2+) as a cofactor.

It localises to the cytoplasm. The catalysed reaction is Endonucleolytic cleavage to 5'-phosphomonoester.. In terms of biological role, endonuclease that specifically degrades the RNA of RNA-DNA hybrids. In Methanococcoides burtonii (strain DSM 6242 / NBRC 107633 / OCM 468 / ACE-M), this protein is Ribonuclease HII.